A 1208-amino-acid chain; its full sequence is Transient receptor potential cation channel subfamily M member 4 (1208 aa).

Topologically, residues 1 to 776 (MVGQEKEQSW…SYFWGAPVTA (776 aa)) are cytoplasmic. Arg-172, Arg-215, and Leu-226 together coordinate ATP. Ca(2+) contacts are provided by Asp-271, Ala-393, Asp-396, and Glu-397. The ATP site is built by Arg-422 and Gly-449. Phosphoserine is present on residues Ser-527 and Ser-538. A helical membrane pass occupies residues 777–797 (FLGNVVSYLLFLLLFAHVLLV). Over 798–808 (DFQPTKPGVFE) the chain is Extracellular. Residues 809-829 (LLLYFWAFTLLCEELRQGLGG) form a helical membrane-spanning segment. Positions 822 and 825 each coordinate Ca(2+). Over 830-857 (GWGTLANGGPGPGKAPLRHRLHLYLLDT) the chain is Cytoplasmic. A helical transmembrane segment spans residues 858–878 (WNQCDLLALTCFLLGVGCRLT). Positions 859 and 862 each coordinate Ca(2+). Residues 879-880 (PG) lie on the Extracellular side of the membrane. A helical membrane pass occupies residues 881–904 (LFDLGRTVLCLDFMIFTLRLLHIF). Residues 905–924 (TVNKQLGPKIVIVSKMMKDV) lie on the Cytoplasmic side of the membrane. The helical transmembrane segment at 925–945 (FFFLFFLCVWLVAYGVATEGI) threads the bilayer. Residues 946-957 (LRPQDRSLPSIL) are Extracellular-facing. The segment at residues 958-978 (RRVFYRPYLQIFGQIPQEEMD) is an intramembrane region (pore-forming). The Selectivity filter motif lies at 969-971 (FGQ). Residues 979 to 1013 (VALMNPSNCSAERGSWAHPEGPVAGSCVSQYANWL) are Extracellular-facing. A disulfide bridge connects residues Cys-987 and Cys-1005. The helical transmembrane segment at 1014-1034 (VVLLLIVFLLVANILLLNLLI) threads the bilayer. The Cytoplasmic portion of the chain corresponds to 1035 to 1208 (AMFSYTFNKV…PPPSPTGSKD (174 aa)). Residues 1070-1170 (APPLIIISHL…EYDRRLRGLE (101 aa)) are calmodulin-binding. Positions 1128 to 1180 (LAQARDKRDSDSERLKRTSQKVDTALKQLGQIREYDRRLRGLEREVQHCSRVL) form a coiled coil. The interval 1130-1135 (QARDKR) is mediates modulation by decavanadate and PIP2-binding. A phosphoserine; by PKC mark is found at Ser-1139 and Ser-1146. The disordered stretch occupies residues 1189–1208 (HSALLPPGGPPPPSPTGSKD). Pro residues predominate over residues 1195-1208 (PGGPPPPSPTGSKD).

Belongs to the transient receptor (TC 1.A.4) family. LTrpC subfamily. TRPM4 sub-subfamily. As to quaternary structure, homotetramer. Phosphorylation by PKC leads to increase the sensitivity to Ca(2+). Post-translationally, sumoylated. Desumoylated by SENP1. In terms of tissue distribution, isoform 1 is highly expressed in the testis with a moderate expression in the brain, spleen and thymus. Isoform 2 is only expressed in the brain and spleen.

The protein localises to the cell membrane. It localises to the endoplasmic reticulum. It is found in the golgi apparatus. The enzyme catalyses Na(+)(in) = Na(+)(out). It catalyses the reaction K(+)(in) = K(+)(out). Its activity is regulated as follows. Gating is voltage-dependent and repressed by decavanadate. Calmodulin-binding confers the Ca(2+) sensitivity. ATP is able to restore Ca(2+) sensitivity after desensitization. Phosphatidylinositol 4,5-bisphosphate (PIP2)-binding strongly enhances activity, by increasing the channel's Ca(2+) sensitivity and shifting its voltage dependence of activation towards negative potentials. Activity is also enhanced by 3,5-bis(trifluoromethyl)pyrazole derivative (BTP2). Exhibits pronounced temperature sensitivity, with activities strongly intensifying near physiological temperatures. TRPM4 can adopt distinct conformations at different temperatures, markedly influencing where and how ligands interact with them. Calcium-activated selective cation channel that mediates membrane depolarization. While it is activated by increase in intracellular Ca(2+), it is impermeable to it. Mediates transport of monovalent cations (Na(+) &gt; K(+) &gt; Cs(+) &gt; Li(+)), leading to depolarize the membrane. It thereby plays a central role in cadiomyocytes, neurons from entorhinal cortex, dorsal root and vomeronasal neurons, endocrine pancreas cells, kidney epithelial cells, cochlea hair cells etc. Participates in T-cell activation by modulating Ca(2+) oscillations after T lymphocyte activation, which is required for NFAT-dependent IL2 production. Involved in myogenic constriction of cerebral arteries. Controls insulin secretion in pancreatic beta-cells. May also be involved in pacemaking or could cause irregular electrical activity under conditions of Ca(2+) overload. Affects T-helper 1 (Th1) and T-helper 2 (Th2) cell motility and cytokine production through differential regulation of calcium signaling and NFATC1 localization. Enhances cell proliferation through up-regulation of the beta-catenin signaling pathway. Plays a role in keratinocyte differentiation. Functionally, lacks channel activity. This is Transient receptor potential cation channel subfamily M member 4 (Trpm4) from Rattus norvegicus (Rat).